The sequence spans 572 residues: Mitochondrial distribution and morphology protein 34 (572 aa).

One can recognise an SMP-LTD domain in the interval 1 to 195 (MAFNFNWSPL…LPAIIHRLSL (195 aa)). Disordered regions lie at residues 212–236 (TASANGEGPGQDPLASPPQDPVDAL), 355–426 (GAGR…PDND), 487–507 (HGASVLEKGKQDPDSSAGSSR), and 552–572 (ACGPFWDRHSQEESPPPAYGH). Residues 358–370 (RHSKAHARKRKKR) show a composition bias toward basic residues. Over residues 371 to 381 (VVDLRRPKTTD) the composition is skewed to basic and acidic residues. Over residues 387 to 400 (SDESSFTESTSAPS) the composition is skewed to polar residues.

Belongs to the MDM34 family. Component of the ER-mitochondria encounter structure (ERMES) or MDM complex, composed of mmm1, mdm10, mdm12 and mdm34.

Its subcellular location is the mitochondrion outer membrane. Functionally, component of the ERMES/MDM complex, which serves as a molecular tether to connect the endoplasmic reticulum (ER) and mitochondria. Components of this complex are involved in the control of mitochondrial shape and protein biogenesis, and function in nonvesicular lipid trafficking between the ER and mitochondria. Mdm34 is required for the interaction of the ER-resident membrane protein mmm1 and the outer mitochondrial membrane-resident beta-barrel protein mdm10. The chain is Mitochondrial distribution and morphology protein 34 from Aspergillus fumigatus (strain ATCC MYA-4609 / CBS 101355 / FGSC A1100 / Af293) (Neosartorya fumigata).